Consider the following 328-residue polypeptide: Methionyl-tRNA formyltransferase (328 aa).

110–113 (SLLP) is a binding site for (6S)-5,6,7,8-tetrahydrofolate.

It belongs to the Fmt family.

The catalysed reaction is L-methionyl-tRNA(fMet) + (6R)-10-formyltetrahydrofolate = N-formyl-L-methionyl-tRNA(fMet) + (6S)-5,6,7,8-tetrahydrofolate + H(+). Attaches a formyl group to the free amino group of methionyl-tRNA(fMet). The formyl group appears to play a dual role in the initiator identity of N-formylmethionyl-tRNA by promoting its recognition by IF2 and preventing the misappropriation of this tRNA by the elongation apparatus. This Prochlorococcus marinus (strain MIT 9215) protein is Methionyl-tRNA formyltransferase.